A 185-amino-acid polypeptide reads, in one-letter code: Ribosome-recycling factor (185 aa).

The tract at residues 142-161 (LVKDGEAGEDEGARAEKELD) is disordered.

This sequence belongs to the RRF family.

The protein localises to the cytoplasm. Functionally, responsible for the release of ribosomes from messenger RNA at the termination of protein biosynthesis. May increase the efficiency of translation by recycling ribosomes from one round of translation to another. The sequence is that of Ribosome-recycling factor from Paenarthrobacter aurescens (strain TC1).